The following is a 407-amino-acid chain: UPF0761 membrane protein AZOSEA40600 (407 aa).

A run of 6 helical transmembrane segments spans residues 29 to 49, 92 to 112, 132 to 152, 174 to 194, 207 to 227, and 239 to 259; these read SLAF…IALF, GLTL…LMTI, LMVH…SVLA, FARL…YYAV, GGIA…LFIV, and FAVL…ILLG.

The protein belongs to the UPF0761 family.

It is found in the cell inner membrane. This Aromatoleum aromaticum (strain DSM 19018 / LMG 30748 / EbN1) (Azoarcus sp. (strain EbN1)) protein is UPF0761 membrane protein AZOSEA40600.